A 32-amino-acid polypeptide reads, in one-letter code: SRKQKFDKKFIKLVIVVDHSMVXKXNNDLIAI.

The Peptidase M12B domain occupies 10–32 (FIKLVIVVDHSMVXKXNNDLIAI).

The protein belongs to the venom metalloproteinase (M12B) family. P-III subfamily. P-IIId sub-subfamily. In terms of assembly, heterodimer of a metalloproteinase subunit and a regulatory subunit comprising two disulfide-linked lectins (14 kDa and 17 kDa chains) (AC Q9PRP7 and AC Q9PRP8). It depends on Zn(2+) as a cofactor. As to expression, expressed by the venom gland.

Its subcellular location is the secreted. Functionally, calcium-dependent prothrombin (F2) activator. This protein may activate prothrombin via recognition by the regulatory subunit of the calcium ion bound conformation of its gamma-carboxyglutamic acid (GLA) domain, and the subsequent conversion of prothrombin to active thrombin is catalyzed by the catalytic subunit. The chain is Zinc metalloproteinase carinactivase-1 catalytic subunit from Echis carinatus (Saw-scaled viper).